Here is a 78-residue protein sequence, read N- to C-terminus: Apolipoprotein C-I (78 aa).

An N-terminal signal peptide occupies residues 1–26 (MRLILWLPVLVVVLLMVLEGPAPAQG).

This sequence belongs to the apolipoprotein C1 family.

Its subcellular location is the secreted. Inhibitor of lipoprotein binding to the low density lipoprotein (LDL) receptor, LDL receptor-related protein, and very low density lipoprotein (VLDL) receptor. Associates with high density lipoproteins (HDL) and the triacylglycerol-rich lipoproteins in the plasma and makes up about 10% of the protein of the VLDL and 2% of that of HDL. Appears to interfere directly with fatty acid uptake and is also the major plasma inhibitor of cholesteryl ester transfer protein (CETP). Binds free fatty acids and reduces their intracellular esterification. Modulates the interaction of APOE with beta-migrating VLDL and inhibits binding of beta-VLDL to the LDL receptor-related protein. The sequence is that of Apolipoprotein C-I (APOC1) from Lynx pardinus (Iberian lynx).